Here is a 292-residue protein sequence, read N- to C-terminus: 4-hydroxy-tetrahydrodipicolinate synthase (292 aa).

Pyruvate is bound at residue Thr-45. Tyr-133 acts as the Proton donor/acceptor in catalysis. Lys-161 acts as the Schiff-base intermediate with substrate in catalysis. Ile-203 is a binding site for pyruvate.

This sequence belongs to the DapA family. In terms of assembly, homotetramer; dimer of dimers.

The protein resides in the cytoplasm. It carries out the reaction L-aspartate 4-semialdehyde + pyruvate = (2S,4S)-4-hydroxy-2,3,4,5-tetrahydrodipicolinate + H2O + H(+). Its pathway is amino-acid biosynthesis; L-lysine biosynthesis via DAP pathway; (S)-tetrahydrodipicolinate from L-aspartate: step 3/4. Its function is as follows. Catalyzes the condensation of (S)-aspartate-beta-semialdehyde [(S)-ASA] and pyruvate to 4-hydroxy-tetrahydrodipicolinate (HTPA). This is 4-hydroxy-tetrahydrodipicolinate synthase from Klebsiella pneumoniae subsp. pneumoniae (strain ATCC 700721 / MGH 78578).